Reading from the N-terminus, the 654-residue chain is tRNA 5-methylaminomethyl-2-thiouridine biosynthesis bifunctional protein MnmC (654 aa).

The segment at 1 to 236 (MPTLLQHAQI…KWEVMSGAYV (236 aa)) is tRNA (mnm(5)s(2)U34)-methyltransferase. Residues 262 to 654 (IGAGLAGSSS…FGLRRLIRGK (393 aa)) are FAD-dependent cmnm(5)s(2)U34 oxidoreductase.

It in the N-terminal section; belongs to the methyltransferase superfamily. tRNA (mnm(5)s(2)U34)-methyltransferase family. This sequence in the C-terminal section; belongs to the DAO family. It depends on FAD as a cofactor.

The protein resides in the cytoplasm. The enzyme catalyses 5-aminomethyl-2-thiouridine(34) in tRNA + S-adenosyl-L-methionine = 5-methylaminomethyl-2-thiouridine(34) in tRNA + S-adenosyl-L-homocysteine + H(+). Functionally, catalyzes the last two steps in the biosynthesis of 5-methylaminomethyl-2-thiouridine (mnm(5)s(2)U) at the wobble position (U34) in tRNA. Catalyzes the FAD-dependent demodification of cmnm(5)s(2)U34 to nm(5)s(2)U34, followed by the transfer of a methyl group from S-adenosyl-L-methionine to nm(5)s(2)U34, to form mnm(5)s(2)U34. This chain is tRNA 5-methylaminomethyl-2-thiouridine biosynthesis bifunctional protein MnmC, found in Pseudomonas putida (strain ATCC 700007 / DSM 6899 / JCM 31910 / BCRC 17059 / LMG 24140 / F1).